We begin with the raw amino-acid sequence, 712 residues long: Probable serine/threonine-protein kinase fhkE (712 aa).

The region spanning 46–100 (ITFGRLKDSTVHYNDKSISGSHCKITRESNDDDGVVIAFIYDNSTNGTFIDNIKV) is the FHA domain. Residues 145–411 (YFIGEMLGQG…CNNIIQHPWF (267 aa)) enclose the Protein kinase domain. ATP is bound by residues 151–159 (LGQGNFATV) and K174. The active-site Proton acceptor is the D270. A coiled-coil region spans residues 414–442 (NVKLSTLLEEDERLRKKAEAEVEANNNNT). The interval 431–695 (AEAEVEANNN…KCQYDPNCYR (265 aa)) is disordered. Low complexity-rich tracts occupy residues 436–446 (EANNNNTNKSN), 459–481 (GNCS…IKSN), 514–571 (NNDN…SNDT), 595–605 (NLQNHLNNNKI), and 616–639 (NNNN…NNNN). The span at 669 to 678 (PQNSSNNNSG) shows a compositional bias: polar residues.

Belongs to the protein kinase superfamily. CAMK Ser/Thr protein kinase family. CHK2 subfamily.

It catalyses the reaction L-seryl-[protein] + ATP = O-phospho-L-seryl-[protein] + ADP + H(+). The enzyme catalyses L-threonyl-[protein] + ATP = O-phospho-L-threonyl-[protein] + ADP + H(+). This chain is Probable serine/threonine-protein kinase fhkE (fhkE), found in Dictyostelium discoideum (Social amoeba).